Here is a 337-residue protein sequence, read N- to C-terminus: tRNA pseudouridine synthase D (337 aa).

Residue D77 is the Nucleophile of the active site. Positions 152-308 (GFPNYFTEQR…ARDFHWEFVE (157 aa)) constitute a TRUD domain.

This sequence belongs to the pseudouridine synthase TruD family.

The catalysed reaction is uridine(13) in tRNA = pseudouridine(13) in tRNA. Its function is as follows. Responsible for synthesis of pseudouridine from uracil-13 in transfer RNAs. The polypeptide is tRNA pseudouridine synthase D (Mannheimia succiniciproducens (strain KCTC 0769BP / MBEL55E)).